Here is a 242-residue protein sequence, read N- to C-terminus: Ribonuclease PH (242 aa).

Residues arginine 87 and 125 to 127 (STR) contribute to the phosphate site.

The protein belongs to the RNase PH family. As to quaternary structure, homohexameric ring arranged as a trimer of dimers.

It carries out the reaction tRNA(n+1) + phosphate = tRNA(n) + a ribonucleoside 5'-diphosphate. Its function is as follows. Phosphorolytic 3'-5' exoribonuclease that plays an important role in tRNA 3'-end maturation. Removes nucleotide residues following the 3'-CCA terminus of tRNAs; can also add nucleotides to the ends of RNA molecules by using nucleoside diphosphates as substrates, but this may not be physiologically important. Probably plays a role in initiation of 16S rRNA degradation (leading to ribosome degradation) during starvation. The chain is Ribonuclease PH from Synechococcus sp. (strain JA-3-3Ab) (Cyanobacteria bacterium Yellowstone A-Prime).